Consider the following 449-residue polypeptide: MSHITFDYSKVLEQFAGQHEIDFLQGQVTEADQALRQGTGPGSDFLGWLELPENYDKEEFARILKAAEKIKADSDVLVVIGIGGSYLGAKAAIDFLNSHFANLQTAKERKAPQILYAGNSISSSYLADLVDYVQDKDFSVNVISKSGTTTEPAIAFRVFKELLVKKYGQEEANKRIYATTDKVKGAVKVEADANHWETFVVPDNVGGRFSVLTAVGLLPIAASGADITALMEGANAARKDLSSDKISENIAYQYAVVRNILYRKGYVTEILANYEPSLQYFSEWWKQLAGESEGKDQKGIYPTSANFSTDLHSLGQFIQEGYRNLFETVIRVDKPRQNVIIPEMAEDLDGLGYLQGKDVDFVNKKATDGVLLAHTDGGVPNMFITLPEQDEFTLGYTIYFFELAIALSGYLNGVNPFDQPGVEAYKKNMFALLGKPGFEELGAALNARL.

The active-site Proton donor is the E291. Residues H312 and K426 contribute to the active site.

This sequence belongs to the GPI family.

The protein localises to the cytoplasm. The catalysed reaction is alpha-D-glucose 6-phosphate = beta-D-fructose 6-phosphate. It functions in the pathway carbohydrate biosynthesis; gluconeogenesis. It participates in carbohydrate degradation; glycolysis; D-glyceraldehyde 3-phosphate and glycerone phosphate from D-glucose: step 2/4. Functionally, catalyzes the reversible isomerization of glucose-6-phosphate to fructose-6-phosphate. This chain is Glucose-6-phosphate isomerase, found in Streptococcus equi subsp. zooepidemicus (strain MGCS10565).